Reading from the N-terminus, the 498-residue chain is L-xylulose/3-keto-L-gulonate kinase (498 aa).

The protein belongs to the FGGY kinase family. In terms of assembly, homodimer.

It catalyses the reaction L-xylulose + ATP = L-xylulose 5-phosphate + ADP + H(+). The enzyme catalyses 3-dehydro-L-gulonate + ATP = 3-dehydro-L-gulonate 6-phosphate + ADP + H(+). Functionally, catalyzes the phosphorylation of L-xylulose and 3-keto-L-gulonate. Is involved in L-lyxose utilization via xylulose, and may also be involved in the utilization of 2,3-diketo-L-gulonate. This is L-xylulose/3-keto-L-gulonate kinase (lyx) from Escherichia coli (strain K12).